The sequence spans 188 residues: Elongation factor P (188 aa).

Belongs to the elongation factor P family.

The protein localises to the cytoplasm. Its pathway is protein biosynthesis; polypeptide chain elongation. Involved in peptide bond synthesis. Stimulates efficient translation and peptide-bond synthesis on native or reconstituted 70S ribosomes in vitro. Probably functions indirectly by altering the affinity of the ribosome for aminoacyl-tRNA, thus increasing their reactivity as acceptors for peptidyl transferase. This Bdellovibrio bacteriovorus (strain ATCC 15356 / DSM 50701 / NCIMB 9529 / HD100) protein is Elongation factor P.